A 67-amino-acid chain; its full sequence is Putative sodium channel alpha-toxin Acra7 (67 aa).

The 65-residue stretch at 2-66 folds into the LCN-type CS-alpha/beta domain; that stretch reads RDGYIVKPTN…PIKDPNQDCT (65 aa). Cystine bridges form between cysteine 12-cysteine 65, cysteine 16-cysteine 37, cysteine 23-cysteine 47, and cysteine 27-cysteine 49. Residue arginine 67 is a propeptide, removed by a carboxypeptidase.

Belongs to the long (4 C-C) scorpion toxin superfamily. Sodium channel inhibitor family. Alpha subfamily. In terms of tissue distribution, expressed by the venom gland.

The protein resides in the secreted. Functionally, alpha toxins bind voltage-independently at site-3 of sodium channels (Nav) and inhibit the inactivation of the activated channels, thereby blocking neuronal transmission. The sequence is that of Putative sodium channel alpha-toxin Acra7 from Androctonus crassicauda (Arabian fat-tailed scorpion).